The primary structure comprises 517 residues: Transmembrane protein 180 (517 aa).

Residues 1-11 lie on the Extracellular side of the membrane; the sequence is MRLGGPWAWLL. A helical membrane pass occupies residues 12-43; that stretch reads GLPTAVVYGSLALFVSVLHNVFLLYYVDTFVS. Residues 44–55 lie on the Cytoplasmic side of the membrane; sequence VYKIDKAAFWVG. A helical transmembrane segment spans residues 56–74; it reads ETVFLLWNSLNDPLFGWLS. The Extracellular segment spans residues 75–100; sequence DRQFLSSQPRSGAGLSSRAVVLARVR. A helical membrane pass occupies residues 101–118; sequence ALGWHGPLLALSFLAFWV. Residues 119–126 lie on the Cytoplasmic side of the membrane; sequence PWAPAGLQ. A helical membrane pass occupies residues 127 to 151; the sequence is FLLCLCLYDGFLTLVDLHHHALLAD. Residues 152 to 155 are Extracellular-facing; sequence LALS. The helical transmembrane segment at 156-179 threads the bilayer; it reads AHDRTHLNFYCSLFSAAGSLSVFA. At 180–191 the chain is on the cytoplasmic side; the sequence is SYAFWNKEDFSS. A helical membrane pass occupies residues 192-223; sequence FRAFCLALATGSGLGFVGAARLLRRRVEAAGR. Residues 224 to 264 are Extracellular-facing; that stretch reads EPGCPAMAVNDGLCEEELLVGGEEAGSITLGQYLQQLARHR. The chain crosses the membrane as a helical span at residues 265-292; it reads NFLWFVGMDLVQVFHCHFNSNFFPLFLE. Residues 293–305 lie on the Cytoplasmic side of the membrane; that stretch reads HLLSDHISLSTGS. Residues 306 to 325 traverse the membrane as a helical segment; the sequence is FLLGISYVAPHLNNLYFLPL. Over 326-330 the chain is Extracellular; it reads CRRWG. Residues 331–350 form a helical membrane-spanning segment; it reads VYAVVRGLFLLKLGLSLLML. Residues 351–358 lie on the Cytoplasmic side of the membrane; it reads LAGPDHPG. A helical transmembrane segment spans residues 359–393; that stretch reads LLCLFIASNRVFTEGTCKLLTLVVTDLVDEDLVLN. Over 394-402 the chain is Extracellular; sequence HRKQAASAL. Residues 403–429 traverse the membrane as a helical segment; the sequence is LFGMVALVTKPGQTFAPLLGTWLLCFY. The Cytoplasmic segment spans residues 430–466; it reads TGHDLFQQHPPAPVGSAQPWPEPPAPPPAQAPPLRQG. The helical transmembrane segment at 467–485 threads the bilayer; it reads CFYLLVLVPIACALLQLFT. Residues 486-517 lie on the Extracellular side of the membrane; it reads WSQFTLHGRRLHMVKAQRQSLSRAQTLDVKMV.

Its subcellular location is the cell membrane. The sequence is that of Transmembrane protein 180 from Bos taurus (Bovine).